Consider the following 301-residue polypeptide: uncharacterized protein (301 aa).

Catalysis depends on charge relay system residues S44 and Y107. The active-site Proton donor is Y133. K162 (schiff-base intermediate with substrate) is an active-site residue.

This sequence belongs to the DapA family. In terms of assembly, homotetramer.

Its subcellular location is the cytoplasm. This is an uncharacterized protein from Pyrobaculum islandicum (strain DSM 4184 / JCM 9189 / GEO3).